The following is a 25-amino-acid chain: Aurein-5.1 (25 aa).

Belongs to the frog skin active peptide (FSAP) family. Aurein subfamily. In terms of tissue distribution, expressed by the skin dorsal glands.

Its subcellular location is the secreted. Has no antimicrobial or anticancer activity. The chain is Aurein-5.1 from Ranoidea aurea (Green and golden bell frog).